Here is a 481-residue protein sequence, read N- to C-terminus: Proline--tRNA ligase (481 aa).

It belongs to the class-II aminoacyl-tRNA synthetase family. ProS type 3 subfamily. In terms of assembly, homodimer.

It localises to the cytoplasm. The enzyme catalyses tRNA(Pro) + L-proline + ATP = L-prolyl-tRNA(Pro) + AMP + diphosphate. Its function is as follows. Catalyzes the attachment of proline to tRNA(Pro) in a two-step reaction: proline is first activated by ATP to form Pro-AMP and then transferred to the acceptor end of tRNA(Pro). The protein is Proline--tRNA ligase of Chlorobaculum tepidum (strain ATCC 49652 / DSM 12025 / NBRC 103806 / TLS) (Chlorobium tepidum).